The sequence spans 103 residues: Large ribosomal subunit protein uL23 (103 aa).

Belongs to the universal ribosomal protein uL23 family. Part of the 50S ribosomal subunit. Contacts protein L29, and trigger factor when it is bound to the ribosome.

One of the early assembly proteins it binds 23S rRNA. One of the proteins that surrounds the polypeptide exit tunnel on the outside of the ribosome. Forms the main docking site for trigger factor binding to the ribosome. This Chlorobium luteolum (strain DSM 273 / BCRC 81028 / 2530) (Pelodictyon luteolum) protein is Large ribosomal subunit protein uL23.